The chain runs to 508 residues: MLO-like protein 3 (508 aa).

Topologically, residues 1 to 21 (MTDKEESNHSSEVGAVRSLQE) are extracellular. Residues 22–42 (TPTWALATVCFFFIAVSICLE) form a helical membrane-spanning segment. The Cytoplasmic portion of the chain corresponds to 43–68 (RLINLLSTRLKKNRKTSLLEAVEKLK). A helical transmembrane segment spans residues 69–89 (SVLMVLGFMSLMLNVTEGEVS). Residues 90–153 (KICIPIKYAN…SEEGLTQLSY (64 aa)) lie on the Extracellular side of the membrane. Residues 154 to 174 (FFFVLACMHILCNLAILLLGM) traverse the membrane as a helical segment. Residues 175–275 (AKMRKWNSWE…IQRSLHEDFK (101 aa)) are Cytoplasmic-facing. The helical transmembrane segment at 276–296 (TVVGISPLMWLTVVIFMLLDV) threads the bilayer. The Extracellular portion of the chain corresponds to 297-304 (SGWRVYFY). The chain crosses the membrane as a helical span at residues 305–325 (MSFVPLIIVLVIGTKLEMIVA). At 326 to 357 (KMAVTIKENNSVIRGTPLVESNDTHFWFSNPR) the chain is on the cytoplasmic side. Residues 358-378 (FLLSILHYTLFLNTFEMAFIV) traverse the membrane as a helical segment. Residues 379 to 401 (WITWQFGINSCYHDNQGIIITRL) lie on the Extracellular side of the membrane. A helical membrane pass occupies residues 402 to 422 (VLAVTVQFLSSYITLPLYAIV). Topologically, residues 423 to 508 (TQMGSSYKRA…EIQIQEKTER (86 aa)) are cytoplasmic. The calmodulin-binding stretch occupies residues 436-457 (EQLANVLRHWQGMVRDKKKTIQ). The segment at 453-492 (KKTIQTPDTDNNSNNNNGDIDSGESPVQTEVASEFRFSGR) is disordered. At Ser494 the chain carries Phosphoserine.

It belongs to the MLO family.

The protein resides in the membrane. Functionally, may be involved in modulation of pathogen defense and leaf cell death. Activity seems to be regulated by Ca(2+)-dependent calmodulin binding and seems not to require heterotrimeric G proteins. This is MLO-like protein 3 (MLO3) from Arabidopsis thaliana (Mouse-ear cress).